A 208-amino-acid polypeptide reads, in one-letter code: Probable GTP-binding protein EngB (208 aa).

Positions 23–205 (LTSEMVILGR…RQTLLKYLLT (183 aa)) constitute an EngB-type G domain. Residues 31-38 (GRSNVGKS), 57-61 (GKTRL), 84-87 (DLPG), 154-157 (TKFD), and 182-184 (FNA) each bind GTP. Mg(2+)-binding residues include Ser-38 and Thr-59.

It belongs to the TRAFAC class TrmE-Era-EngA-EngB-Septin-like GTPase superfamily. EngB GTPase family. It depends on Mg(2+) as a cofactor.

In terms of biological role, necessary for normal cell division and for the maintenance of normal septation. The protein is Probable GTP-binding protein EngB of Helicobacter pylori (strain J99 / ATCC 700824) (Campylobacter pylori J99).